Here is a 231-residue protein sequence, read N- to C-terminus: Large ribosomal subunit protein uL1 (231 aa).

This sequence belongs to the universal ribosomal protein uL1 family. As to quaternary structure, part of the 50S ribosomal subunit.

In terms of biological role, binds directly to 23S rRNA. The L1 stalk is quite mobile in the ribosome, and is involved in E site tRNA release. Functionally, protein L1 is also a translational repressor protein, it controls the translation of the L11 operon by binding to its mRNA. This is Large ribosomal subunit protein uL1 from Clostridium kluyveri (strain NBRC 12016).